A 45-amino-acid polypeptide reads, in one-letter code: Cytochrome b559 subunit beta (45 aa).

T2 bears the N-acetylthreonine mark. Over 2-17 (TSNTPNQEPVSYPIFT) the chain is Cytoplasmic. A helical membrane pass occupies residues 18–42 (VRWVAVHTLAVPTIFFLGAIAAMQF). Heme is bound at residue H24. Residues 43-45 (IQR) are Lumenal-facing.

As to quaternary structure, heterodimer of an alpha subunit and a beta subunit. PSII is composed of 1 copy each of membrane proteins PsbA, PsbB, PsbC, PsbD, PsbE, PsbF, PsbH, PsbI, PsbJ, PsbK, PsbL, PsbM, PsbT, PsbX, PsbY, PsbZ, Psb30/Ycf12, peripheral proteins PsbO, CyanoQ (PsbQ), PsbU, PsbV and a large number of cofactors. It forms dimeric complexes. Part of a photosystem II (PSII) assembly intermediate complex PSII-I; crystallized from a strain deleted of psbJ, it forms monomeric PSII before addition of the oxygen evolving complex. PSII-I includes 3 assembly factors not found in mature PSII (Psb27, Psb28 and Psb34). Heme b is required as a cofactor.

It localises to the cellular thylakoid membrane. Its function is as follows. This b-type cytochrome is tightly associated with the reaction center of photosystem II (PSII). PSII is a light-driven water:plastoquinone oxidoreductase that uses light energy to abstract electrons from H(2)O, generating O(2) and a proton gradient subsequently used for ATP formation. It consists of a core antenna complex that captures photons, and an electron transfer chain that converts photonic excitation into a charge separation. The chain is Cytochrome b559 subunit beta from Thermosynechococcus vestitus (strain NIES-2133 / IAM M-273 / BP-1).